The sequence spans 126 residues: Anti-adapter protein IraD (126 aa).

This sequence belongs to the GpW/Gp25 family. IraD subfamily. Interacts with RssB.

It localises to the cytoplasm. Its function is as follows. Inhibits RpoS proteolysis by regulating RssB activity, thereby increasing the stability of the sigma stress factor RpoS during oxidative stress. Its effect on RpoS stability is due to its interaction with RssB, which probably blocks the interaction of RssB with RpoS, and the consequent delivery of the RssB-RpoS complex to the ClpXP protein degradation pathway. The protein is Anti-adapter protein IraD of Salmonella choleraesuis (strain SC-B67).